Here is a 459-residue protein sequence, read N- to C-terminus: NADH-ubiquinone oxidoreductase chain 4 (459 aa).

13 helical membrane-spanning segments follow: residues 22-42 (MIWI…LLFF), 60-80 (PLTT…IMAS), 94-112 (LYLS…TFTA), 113-133 (TELI…LVII), 145-165 (AGTY…IALI), 196-216 (WLAY…HLWL), 224-244 (PIAG…YGMM), 257-277 (MAYP…SISL), 284-303 (SLIA…AILI), 308-330 (SFTG…FCLA), 351-371 (LLPL…ALPP), 391-411 (TTLL…LYMF), and 435-455 (ILMF…DIIT).

This sequence belongs to the complex I subunit 4 family. In terms of assembly, core subunit of respiratory chain NADH dehydrogenase (Complex I) which is composed of 45 different subunits.

It is found in the mitochondrion inner membrane. The catalysed reaction is a ubiquinone + NADH + 5 H(+)(in) = a ubiquinol + NAD(+) + 4 H(+)(out). In terms of biological role, core subunit of the mitochondrial membrane respiratory chain NADH dehydrogenase (Complex I) which catalyzes electron transfer from NADH through the respiratory chain, using ubiquinone as an electron acceptor. Essential for the catalytic activity and assembly of complex I. The chain is NADH-ubiquinone oxidoreductase chain 4 (MT-ND4) from Gorilla gorilla gorilla (Western lowland gorilla).